Here is a 2082-residue protein sequence, read N- to C-terminus: Probable ATP-dependent helicase PF08_0048 (2082 aa).

Positions 66 to 138 constitute an HSA domain; it reads KIVEPAKTPE…EEKRLKLYSK (73 aa). Over residues 209-221 the composition is skewed to low complexity; it reads NNSEIVNNNASSV. Disordered stretches follow at residues 209–234 and 301–470; these read NNSE…DDLT and NVIE…SPTR. Basic and acidic residues-rich tracts occupy residues 419–448 and 455–465; these read NSDH…HIDN and TGEDYKSDKEN. The stretch at 476-531 forms a coiled coil; sequence KKEKYDEYDTKLKIEKREEENKNYEKDEHEYESDNYDKEKINKKKELILLKNDIEN. Residues 532–641 form a disordered region; the sequence is DSDETSEHIK…KNDSDDNDDI (110 aa). Residues 536-545 are compositionally biased toward basic and acidic residues; the sequence is TSEHIKRDSR. The span at 579–598 shows a compositional bias: low complexity; that stretch reads DNNNSENDNNNDNNNDNNND. Acidic residues predominate over residues 599–627; the sequence is NNDDNNDDNNDDNNDDNNDDNNDDNNDDN. Positions 674–839 constitute a Helicase ATP-binding domain; it reads LYLYKNNING…WSLLHFLMPN (166 aa). 687-694 lines the ATP pocket; it reads DEMGLGKT. The DEAH box motif lies at 790–793; the sequence is DEAH. Positions 1199-1255 are disordered; sequence EQNNNNSKDNNNNIDNNNNIDNNNNIDNNNNIDNNNNIDNNNNNIDNNNNIDNHHNN. In terms of domain architecture, Helicase C-terminal spans 1772–1922; it reads ALEKLLSKCK…NICINMGNFN (151 aa). Residues 1972-2060 adopt a coiled-coil conformation; the sequence is EQVENKDKMN…DEMRMKIEIE (89 aa).

It belongs to the SNF2/RAD54 helicase family. SWR1 subfamily. Component of a chromatin-remodeling complex.

It localises to the nucleus. Functionally, catalytic component of a chromatin remodeling complex. In Plasmodium falciparum (isolate 3D7), this protein is Probable ATP-dependent helicase PF08_0048.